Consider the following 524-residue polypeptide: Histidine ammonia-lyase (524 aa).

Positions 139–141 (ASG) form a cross-link, 5-imidazolinone (Ala-Gly). A 2,3-didehydroalanine (Ser) modification is found at serine 140. The tract at residues 500 to 524 (ADTQAPAPAKLPDSGDEDRDTTSRH) is disordered.

Belongs to the PAL/histidase family. Contains an active site 4-methylidene-imidazol-5-one (MIO), which is formed autocatalytically by cyclization and dehydration of residues Ala-Ser-Gly.

It is found in the cytoplasm. The catalysed reaction is L-histidine = trans-urocanate + NH4(+). It participates in amino-acid degradation; L-histidine degradation into L-glutamate; N-formimidoyl-L-glutamate from L-histidine: step 1/3. The polypeptide is Histidine ammonia-lyase (hutH) (Deinococcus radiodurans (strain ATCC 13939 / DSM 20539 / JCM 16871 / CCUG 27074 / LMG 4051 / NBRC 15346 / NCIMB 9279 / VKM B-1422 / R1)).